Reading from the N-terminus, the 855-residue chain is Envelope glycoprotein gp150 (855 aa).

At 1–784 (MAEGGFTHNQ…WIGKIPQYLK (784 aa)) the chain is on the extracellular side. Asn135, Asn220, Asn258, Asn269, Asn274, Asn298, Asn330, Asn336, Asn342, Asn372, Asn418, Asn422, Asn448, Asn469, Asn481, Asn499, Asn518, Asn531, Asn548, and Asn551 each carry an N-linked (GlcNAc...) asparagine; by host glycan. Positions 615 to 635 (IMLALATVLSMAGAGTGATAI) are fusion peptide. Positions 642–692 (HQVLATHQQALEKITEALKINNLRLITLEHQVLVIGLRVEAIEKFLYTAFA) form a coiled coil. An immunosuppression region spans residues 661-679 (INNLRLITLEHQVLVIGLR). N-linked (GlcNAc...) asparagine; by host glycosylation is found at Asn716, Asn720, Asn728, and Asn736. Residues 735–771 (YNQTRDLQNKFYEIIMDIEQNNVQGKTGIQQLQKWEN) are a coiled coil. A helical transmembrane segment spans residues 785 to 805 (GLLGSVLGIGLGILLLLICLP). The Cytoplasmic portion of the chain corresponds to 806 to 855 (TLVDCIRNCTNKILGYTVIAMPEIDDEEVHLSVELRRNGRQCGISEKEEE).

As to quaternary structure, the mature envelope protein (Env) consists of a trimer of SU-TM heterodimers attached by noncovalent interactions or by a labile interchain disulfide bond. Post-translationally, specific enzymatic cleavages in vivo yield mature proteins. Envelope glycoproteins are synthesized as an inactive precursor that is N-glycosylated and processed likely by host cell furin or by a furin-like protease in the Golgi to yield the mature SU and TM proteins. The cleavage site between SU and TM requires the minimal sequence [KR]-X-[KR]-R.

Its subcellular location is the virion membrane. It localises to the host cell membrane. In terms of biological role, the surface protein (SU) attaches the virus to the host cell by binding to its receptor. This interaction triggers the refolding of the transmembrane protein (TM) and is thought to activate its fusogenic potential by unmasking its fusion peptide. Fusion occurs at the host cell plasma membrane. Functionally, the transmembrane protein (TM) acts as a class I viral fusion protein. Under the current model, the protein has at least 3 conformational states: pre-fusion native state, pre-hairpin intermediate state, and post-fusion hairpin state. During viral and target cell membrane fusion, the coiled coil regions (heptad repeats) assume a trimer-of-hairpins structure, positioning the fusion peptide in close proximity to the C-terminal region of the ectodomain. The formation of this structure appears to drive apposition and subsequent fusion of viral and target cell membranes. Membranes fusion leads to delivery of the nucleocapsid into the cytoplasm. The chain is Envelope glycoprotein gp150 (env) from Feline immunodeficiency virus (isolate TM2) (FIV).